Consider the following 56-residue polypeptide: Protein p56 (56 aa).

The protein belongs to the phi29likevirus protein p56 family. Homodimer. Interacts with host UDG; this interaction inhibits the uracil-DNA glycosylase.

Its function is as follows. Inhibits the host uracil-DNA glycosylase (UDG), an enzyme which removes uracil residues from DNA by the base excision repair. Interacts with host uracil-DNA glycosylase and prevents the latter from binding to DNA. Since the viral DNA polymerase efficiently incorporates dUMP into DNA, the virus needs to prevent the deleterious effect caused by host UDG when it eliminates uracil residues present in the viral genome. This is Protein p56 (1B) from Bacillus phage PZA (Bacteriophage PZA).